We begin with the raw amino-acid sequence, 1025 residues long: Multidrug resistance protein MdtC (1025 aa).

12 consecutive transmembrane segments (helical) span residues Phe-3–Leu-23, Glu-333–Leu-353, Ile-360–Cys-380, Leu-387–Leu-407, Val-431–Leu-451, Phe-463–Pro-483, Leu-528–Pro-548, Val-853–Ser-873, Val-875–Leu-895, Leu-897–Val-917, Pro-953–Gly-973, and Ile-984–Val-1004.

The protein belongs to the resistance-nodulation-cell division (RND) (TC 2.A.6) family. MdtC subfamily. Part of a tripartite efflux system composed of MdtA, MdtB and MdtC. MdtC forms a heteromultimer with MdtB.

The protein localises to the cell inner membrane. The MdtABC tripartite complex confers resistance against novobiocin and deoxycholate. This chain is Multidrug resistance protein MdtC, found in Escherichia coli (strain UTI89 / UPEC).